The chain runs to 303 residues: Cytosolic-abundant heat soluble protein 3 (303 aa).

A compositionally biased stretch (low complexity) spans 1-19; sequence MSSRQNQQSSSQHSSSSQQ. The tract at residues 1-67 is disordered; that stretch reads MSSRQNQQSS…PGSHSEVHEE (67 aa). A coiled-coil region spans residues 170 to 257; the sequence is ARQDEQDAGM…ESAKAQTNVN (88 aa). CAHS motif regions lie at residues 184-202 and 221-239; these read YREEVERDAELIRQILERQ and QEREIQLEAEYAMRALELE. Residues 270 to 280 show a composition bias toward polar residues; it reads KGAIQTSADKS. Residues 270–303 form a disordered region; that stretch reads KGAIQTSADKSSTTKTGPTTVTQIKHTEQHTERR. Over residues 282–291 the composition is skewed to low complexity; sequence TTKTGPTTVT. Residues 294–303 are compositionally biased toward basic and acidic residues; that stretch reads KHTEQHTERR.

The protein belongs to the Cytosolic-abundant heat soluble protein (CAHS) family.

The protein resides in the cytoplasm. Functionally, CAHS proteins are cytosolic heat soluble proteins that seem to contribute to the anhydrobiosis in tardigrades, but their specific mechanisms are yet to be identified. It is possible that protection during anhydrobiosis might occur via the stabilization of vitrifying small molecules such as sugars, but not via the direct glass transition of CAHS proteins themselves. The chain is Cytosolic-abundant heat soluble protein 3 from Ramazzottius varieornatus (Water bear).